Consider the following 428-residue polypeptide: Putative heme-binding peroxidase (428 aa).

Residues 1–33 are disordered; that stretch reads MTAIQKPVVAKREAPKAEVNPTVSRSTQTETIK. Over residues 21 to 32 the composition is skewed to polar residues; sequence PTVSRSTQTETI. The active-site Proton acceptor is the H188. H312 lines the heme b pocket. W328 (tryptophan radical intermediate) is an active-site residue.

The protein belongs to the peroxidase family. Cytochrome c peroxidase subfamily. Heme b serves as cofactor.

In terms of biological role, destroys radicals which are normally produced within the cells and which are toxic to biological systems. This Debaryomyces hansenii (strain ATCC 36239 / CBS 767 / BCRC 21394 / JCM 1990 / NBRC 0083 / IGC 2968) (Yeast) protein is Putative heme-binding peroxidase.